The primary structure comprises 570 residues: Putative periplasmic trehalase (570 aa).

Residues 1 to 34 form the signal peptide; sequence MIPPEIRRSVLLQKAIKLALAGTLLTFASFSATA. Substrate contacts are provided by residues Arg-159, 166-167, Asn-203, 212-214, 284-286, and Gly-317; these read WD, RSQ, and RPE. Residues Asp-319 and Glu-503 each act as proton donor/acceptor in the active site. Glu-518 is a substrate binding site. Residues 544 to 570 form a disordered region; sequence KPCDSVPSTRPASLSATPTKTPSAATQ. The span at 554 to 570 shows a compositional bias: low complexity; it reads PASLSATPTKTPSAATQ.

Belongs to the glycosyl hydrolase 37 family. As to quaternary structure, monomer.

It is found in the periplasm. It catalyses the reaction alpha,alpha-trehalose + H2O = alpha-D-glucose + beta-D-glucose. Its function is as follows. Provides the cells with the ability to utilize trehalose at high osmolarity by splitting it into glucose molecules that can subsequently be taken up by the phosphotransferase-mediated uptake system. This Salmonella typhi protein is Putative periplasmic trehalase.